The primary structure comprises 299 residues: Probable alpha-L-glutamate ligase (299 aa).

In terms of domain architecture, ATP-grasp spans 112–294; the sequence is LQLLTEQGIA…IALQMIVHIE (183 aa). Residues Lys148, 185–186, Asp194, and 218–220 contribute to the ATP site; these read DF and RAN. Residues Asp255, Glu267, and Asn269 each coordinate Mg(2+). The Mn(2+) site is built by Asp255, Glu267, and Asn269.

Belongs to the RimK family. Requires Mg(2+) as cofactor. It depends on Mn(2+) as a cofactor.

This is Probable alpha-L-glutamate ligase from Histophilus somni (strain 2336) (Haemophilus somnus).